Consider the following 356-residue polypeptide: Nicotinate-nucleotide--dimethylbenzimidazole phosphoribosyltransferase (356 aa).

Residue Glu317 is the Proton acceptor of the active site.

It belongs to the CobT family. As to quaternary structure, homodimer.

It catalyses the reaction 5,6-dimethylbenzimidazole + nicotinate beta-D-ribonucleotide = alpha-ribazole 5'-phosphate + nicotinate + H(+). It functions in the pathway nucleoside biosynthesis; alpha-ribazole biosynthesis; alpha-ribazole from 5,6-dimethylbenzimidazole: step 1/2. Catalyzes the synthesis of alpha-ribazole-5'-phosphate from nicotinate mononucleotide (NAMN) and 5,6-dimethylbenzimidazole (DMB). The sequence is that of Nicotinate-nucleotide--dimethylbenzimidazole phosphoribosyltransferase from Salmonella paratyphi C (strain RKS4594).